A 132-amino-acid chain; its full sequence is Ribosome-binding factor A (132 aa).

This sequence belongs to the RbfA family. Monomer. Binds 30S ribosomal subunits, but not 50S ribosomal subunits or 70S ribosomes.

The protein localises to the cytoplasm. Functionally, one of several proteins that assist in the late maturation steps of the functional core of the 30S ribosomal subunit. Associates with free 30S ribosomal subunits (but not with 30S subunits that are part of 70S ribosomes or polysomes). Required for efficient processing of 16S rRNA. May interact with the 5'-terminal helix region of 16S rRNA. In Treponema denticola (strain ATCC 35405 / DSM 14222 / CIP 103919 / JCM 8153 / KCTC 15104), this protein is Ribosome-binding factor A.